A 317-amino-acid polypeptide reads, in one-letter code: Probable arabinan endo-1,5-alpha-L-arabinosidase C (317 aa).

The signal sequence occupies residues 1 to 17 (MLSFLAALSLPLALVNA). The active-site Proton acceptor is D32. N-linked (GlcNAc...) asparagine glycosylation occurs at N190. Catalysis depends on E198, which acts as the Proton donor.

Belongs to the glycosyl hydrolase 43 family.

The protein localises to the secreted. The enzyme catalyses Endohydrolysis of (1-&gt;5)-alpha-arabinofuranosidic linkages in (1-&gt;5)-arabinans.. It functions in the pathway glycan metabolism; L-arabinan degradation. Functionally, endo-1,5-alpha-L-arabinanase involved in degradation of pectin. Its preferred substrate is linear 1,5-alpha-L-arabinan. In Aspergillus flavus (strain ATCC 200026 / FGSC A1120 / IAM 13836 / NRRL 3357 / JCM 12722 / SRRC 167), this protein is Probable arabinan endo-1,5-alpha-L-arabinosidase C (abnC).